The primary structure comprises 321 residues: Anthranilate phosphoribosyltransferase (321 aa).

Residues G72, 75 to 76 (GD), T80, 82 to 85 (NVST), 99 to 107 (KHGNVSITS), and S111 contribute to the 5-phospho-alpha-D-ribose 1-diphosphate site. G72 serves as a coordination point for anthranilate. Position 84 (S84) interacts with Mg(2+). Position 102 (N102) interacts with anthranilate. R157 provides a ligand contact to anthranilate. Residues D216 and E217 each coordinate Mg(2+).

This sequence belongs to the anthranilate phosphoribosyltransferase family. Homodimer. The cofactor is Mg(2+).

It catalyses the reaction N-(5-phospho-beta-D-ribosyl)anthranilate + diphosphate = 5-phospho-alpha-D-ribose 1-diphosphate + anthranilate. Its pathway is amino-acid biosynthesis; L-tryptophan biosynthesis; L-tryptophan from chorismate: step 2/5. Functionally, catalyzes the transfer of the phosphoribosyl group of 5-phosphorylribose-1-pyrophosphate (PRPP) to anthranilate to yield N-(5'-phosphoribosyl)-anthranilate (PRA). This chain is Anthranilate phosphoribosyltransferase, found in Methanococcus maripaludis (strain C7 / ATCC BAA-1331).